Consider the following 58-residue polypeptide: Large ribosomal subunit protein uL30 (58 aa).

The protein belongs to the universal ribosomal protein uL30 family. As to quaternary structure, part of the 50S ribosomal subunit.

This chain is Large ribosomal subunit protein uL30, found in Desulfovibrio desulfuricans (strain ATCC 27774 / DSM 6949 / MB).